Here is a 331-residue protein sequence, read N- to C-terminus: Biotin synthase (331 aa).

The Radical SAM core domain maps to 40–269; the sequence is YRVQLASLLS…HARVRLSAGR (230 aa). [4Fe-4S] cluster is bound by residues C55, C59, and C62. Residues C100, C132, C192, and R264 each coordinate [2Fe-2S] cluster.

The protein belongs to the radical SAM superfamily. Biotin synthase family. Homodimer. Requires [4Fe-4S] cluster as cofactor. [2Fe-2S] cluster is required as a cofactor.

It catalyses the reaction (4R,5S)-dethiobiotin + (sulfur carrier)-SH + 2 reduced [2Fe-2S]-[ferredoxin] + 2 S-adenosyl-L-methionine = (sulfur carrier)-H + biotin + 2 5'-deoxyadenosine + 2 L-methionine + 2 oxidized [2Fe-2S]-[ferredoxin]. It functions in the pathway cofactor biosynthesis; biotin biosynthesis; biotin from 7,8-diaminononanoate: step 2/2. Its function is as follows. Catalyzes the conversion of dethiobiotin (DTB) to biotin by the insertion of a sulfur atom into dethiobiotin via a radical-based mechanism. The chain is Biotin synthase from Synechococcus sp. (strain CC9605).